A 352-amino-acid polypeptide reads, in one-letter code: Probable dual-specificity RNA methyltransferase RlmN (352 aa).

Glu93 acts as the Proton acceptor in catalysis. The region spanning 99–332 is the Radical SAM core domain; that stretch reads TAKRLTVCVS…ATVRQTRGLD (234 aa). Cys106 and Cys337 are oxidised to a cystine. Cys113, Cys117, and Cys120 together coordinate [4Fe-4S] cluster. Residues 160-161, Ser190, 213-215, and Asn294 each bind S-adenosyl-L-methionine; these read GE and SLH. Catalysis depends on Cys337, which acts as the S-methylcysteine intermediate.

Belongs to the radical SAM superfamily. RlmN family. The cofactor is [4Fe-4S] cluster.

The protein resides in the cytoplasm. It carries out the reaction adenosine(2503) in 23S rRNA + 2 reduced [2Fe-2S]-[ferredoxin] + 2 S-adenosyl-L-methionine = 2-methyladenosine(2503) in 23S rRNA + 5'-deoxyadenosine + L-methionine + 2 oxidized [2Fe-2S]-[ferredoxin] + S-adenosyl-L-homocysteine. The catalysed reaction is adenosine(37) in tRNA + 2 reduced [2Fe-2S]-[ferredoxin] + 2 S-adenosyl-L-methionine = 2-methyladenosine(37) in tRNA + 5'-deoxyadenosine + L-methionine + 2 oxidized [2Fe-2S]-[ferredoxin] + S-adenosyl-L-homocysteine. Functionally, specifically methylates position 2 of adenine 2503 in 23S rRNA and position 2 of adenine 37 in tRNAs. The polypeptide is Probable dual-specificity RNA methyltransferase RlmN (Synechococcus sp. (strain JA-2-3B'a(2-13)) (Cyanobacteria bacterium Yellowstone B-Prime)).